Reading from the N-terminus, the 776-residue chain is ADP-ribosylation factor GTPase-activating protein AGD2 (776 aa).

The 225-residue stretch at 2–226 (AGFINLEDSP…IHQVLTYAQQ (225 aa)) folds into the BAR domain. A disordered region spans residues 248–267 (QSELDSQQASAKADPSDVGG). One can recognise a PH domain in the interval 290–421 (EVTKQGYLLK…WVNKITAAIT (132 aa)). Residues 467-604 (DDVLTILREI…ALVVKDEREA (138 aa)) form the Arf-GAP domain. The segment at 482-505 (CAECNAPDPDWASLNLGVLMCIEC) adopts a C4-type zinc-finger fold. 2 ANK repeats span residues 683–712 (QGCS…DINM) and 716–745 (HGRT…RPSI).

Expressed in roots, hypocotyls, cotyledons, leaf and shoot apical meristems and siliques.

Its function is as follows. Probable GTPase-activating protein. This chain is ADP-ribosylation factor GTPase-activating protein AGD2 (AGD2), found in Arabidopsis thaliana (Mouse-ear cress).